We begin with the raw amino-acid sequence, 753 residues long: Protein transport protein SEC23-1 (753 aa).

The Zn(2+) site is built by C56, C61, C80, and C83.

Belongs to the SEC23/SEC24 family. SEC23 subfamily. The COPII coat is composed of at least 5 proteins: the SEC23/24 complex, the SEC13/31 complex, and the protein SAR1.

The protein resides in the cytoplasm. It localises to the cytoplasmic vesicle. It is found in the COPII-coated vesicle membrane. The protein localises to the endoplasmic reticulum membrane. Its subcellular location is the golgi apparatus membrane. Functionally, component of the coat protein complex II (COPII) which promotes the formation of transport vesicles from the endoplasmic reticulum (ER). The coat has two main functions, the physical deformation of the endoplasmic reticulum membrane into vesicles and the selection of cargo molecules. This Candida glabrata (strain ATCC 2001 / BCRC 20586 / JCM 3761 / NBRC 0622 / NRRL Y-65 / CBS 138) (Yeast) protein is Protein transport protein SEC23-1 (SEC231).